Consider the following 414-residue polypeptide: Putative dipeptidase ARB_02715 (414 aa).

The signal sequence occupies residues 1–20 (MAALFVSLLALTSLVPVQGA). Residues His45, Asp47, and Glu157 each coordinate Zn(2+). An intrachain disulfide couples Cys96 to Cys186. His184 is a substrate binding site. Zn(2+)-binding residues include His228 and His249. Positions 260 and 320 each coordinate substrate. A glycan (N-linked (GlcNAc...) asparagine) is linked at Asn392.

Belongs to the metallo-dependent hydrolases superfamily. Peptidase M19 family. Requires Zn(2+) as cofactor.

It carries out the reaction an L-aminoacyl-L-amino acid + H2O = 2 an L-alpha-amino acid. In terms of biological role, hydrolyzes a wide range of dipeptides. This Arthroderma benhamiae (strain ATCC MYA-4681 / CBS 112371) (Trichophyton mentagrophytes) protein is Putative dipeptidase ARB_02715.